The chain runs to 237 residues: UDP-Gal:alpha-D-GlcNAc-diphosphoundecaprenol beta-1,4-galactosyltransferase (237 aa).

The active-site Nucleophile is Glu101.

It belongs to the glycosyltransferase 26 family. It depends on Mn(2+) as a cofactor. The cofactor is Ni(2+). Pb(2+) serves as cofactor.

It catalyses the reaction N-acetyl-alpha-D-glucosaminyl-di-trans,octa-cis-undecaprenyl diphosphate + UDP-alpha-D-galactose = beta-D-Gal-(1-&gt;4)-alpha-D-GlcNAc-di-trans,octa-cis-undecaprenyl diphosphate + UDP + H(+). It participates in bacterial outer membrane biogenesis; LPS O-antigen biosynthesis. Functionally, galactosyltransferase that adds one galactose residue in the beta-1-4 linkage to GlcNAc-alpha-pyrophosphate-lipid in the biosynthesis of the O-polysaccharide repeating unit of the O antigen. In Shigella boydii, this protein is UDP-Gal:alpha-D-GlcNAc-diphosphoundecaprenol beta-1,4-galactosyltransferase (wfeD).